The chain runs to 149 residues: Transcriptional repressor NrdR (149 aa).

A zinc finger lies at 3–34 (CPFCGHLETQVVETRISEDAEFIRRRRQCGAC). The 91-residue stretch at 49–139 (PSIVKKDGRR…VYRSFEDIDE (91 aa)) folds into the ATP-cone domain.

This sequence belongs to the NrdR family. The cofactor is Zn(2+).

Negatively regulates transcription of bacterial ribonucleotide reductase nrd genes and operons by binding to NrdR-boxes. The polypeptide is Transcriptional repressor NrdR (Polaromonas naphthalenivorans (strain CJ2)).